We begin with the raw amino-acid sequence, 280 residues long: Suppressor of disruption of TFIIS (280 aa).

The protein belongs to the SSM1 family.

Could be an enzyme that inactivates 6-azauracil by modifying it. This chain is Suppressor of disruption of TFIIS (SDT1), found in Saccharomyces cerevisiae (strain ATCC 204508 / S288c) (Baker's yeast).